Reading from the N-terminus, the 199-residue chain is Chromophore lyase CpcT/CpeT 2 (199 aa).

The protein belongs to the CpcT/CpeT biliprotein lyase family.

Functionally, covalently attaches a chromophore to Cys residue(s) of phycobiliproteins. The chain is Chromophore lyase CpcT/CpeT 2 from Synechococcus sp. (strain JA-3-3Ab) (Cyanobacteria bacterium Yellowstone A-Prime).